The primary structure comprises 491 residues: Trypanothione reductase (491 aa).

35-52 serves as a coordination point for FAD; that stretch reads DVQATHGPPALVALGGTC. Cys52 and Cys57 are oxidised to a cystine. Residue His461 is the Proton acceptor of the active site.

The protein belongs to the class-I pyridine nucleotide-disulfide oxidoreductase family. As to quaternary structure, homodimer. Requires FAD as cofactor.

The protein resides in the cytoplasm. The enzyme catalyses trypanothione + NADP(+) = trypanothione disulfide + NADPH + H(+). In terms of biological role, trypanothione is the parasite analog of glutathione; this enzyme is the equivalent of glutathione reductase. This is Trypanothione reductase (TPR) from Leishmania donovani.